The primary structure comprises 854 residues: Nucleolar MIF4G domain-containing protein 1 (854 aa).

Positions 2-275 (PRNVPEVNGV…EEDPDWQVLQ (274 aa)) are necessary for nucleolar localization and for targeting PPP1CA to the nucleolus. Ser60 bears the Phosphoserine mark. Disordered regions lie at residues 66–215 (ESRS…PLSF) and 231–333 (SGGG…GEKY). A compositionally biased stretch (basic residues) spans 76–99 (PGGRKSRKELRKEKRHLRKARRLQ). The segment covering 104-113 (SGSGDQGGNV) has biased composition (gly residues). The span at 128 to 173 (VRPTPAKATATPAKASAPSTNTKASAAQPKAKAKGAPGKPGPATAT) shows a compositional bias: low complexity. The segment covering 188–197 (REIRKLERCL) has biased composition (basic and acidic residues). Residues 265–280 (SEEDPDWQVLQEDQED) are compositionally biased toward acidic residues. Composition is skewed to basic and acidic residues over residues 281 to 291 (VNSKRRGEAES), 303 to 315 (RFAEVVEKSRSSS), and 322 to 331 (QESHSVESGE). The short motif at 301–304 (KVRF) is the Required for efficient binding to PPP1CA and for targeting PPP1CA to the nucleolus element. Ser311, Ser314, and Ser315 each carry phosphoserine. Positions 356–553 (KKHVKGLINR…ETMLALKNND (198 aa)) constitute an MIF4G domain. The MI domain maps to 648–764 (DVRRIIFCTL…PLSVLKVVEF (117 aa)).

The protein belongs to the CWC22 family. As to quaternary structure, may interact with EIF4A1, EIF4A2 and EIF4A3. Interacts with PPP1CA and PPP1CC.

It is found in the nucleus. The protein localises to the nucleolus. Functionally, plays a role in targeting PPP1CA to the nucleolus. The sequence is that of Nucleolar MIF4G domain-containing protein 1 (Nom1) from Mus musculus (Mouse).